The sequence spans 462 residues: Glutamate--tRNA ligase 2 (462 aa).

Residues 8-18 carry the 'HIGH' region motif; that stretch reads PSPTGYLHIGG. The short motif at 236–240 is the 'KMSKS' region element; the sequence is KLSKR. Lysine 239 is an ATP binding site.

The protein belongs to the class-I aminoacyl-tRNA synthetase family. Glutamate--tRNA ligase type 1 subfamily. As to quaternary structure, monomer.

It is found in the cytoplasm. The catalysed reaction is tRNA(Glu) + L-glutamate + ATP = L-glutamyl-tRNA(Glu) + AMP + diphosphate. Catalyzes the attachment of glutamate to tRNA(Glu) in a two-step reaction: glutamate is first activated by ATP to form Glu-AMP and then transferred to the acceptor end of tRNA(Glu). The sequence is that of Glutamate--tRNA ligase 2 from Nitratiruptor sp. (strain SB155-2).